The primary structure comprises 442 residues: Zinc finger protein sfp1 (442 aa).

Residues 193–208 (AASSDMSSDEASSQAE) show a composition bias toward low complexity. Disordered stretches follow at residues 193–219 (AASS…MPES) and 304–333 (SPFV…HDSP). C2H2-type zinc fingers lie at residues 350 to 375 (YKCP…LHGH) and 399 to 422 (YRCE…THSH).

The protein localises to the cytoplasm. The protein resides in the nucleus. The sequence is that of Zinc finger protein sfp1 (sfp1) from Schizosaccharomyces pombe (strain 972 / ATCC 24843) (Fission yeast).